Consider the following 151-residue polypeptide: Protein SprT-like (151 aa).

Residues 7–147 (QKLTESISES…GKCKGKLHLH (141 aa)) form the SprT-like domain. Position 67 (His67) interacts with Zn(2+). Glu68 is an active-site residue. Position 71 (His71) interacts with Zn(2+).

It belongs to the SprT family. It depends on Zn(2+) as a cofactor.

It is found in the cytoplasm. The sequence is that of Protein SprT-like from Staphylococcus carnosus (strain TM300).